The primary structure comprises 188 residues: Crossover junction endodeoxyribonuclease RuvC (188 aa).

Catalysis depends on residues aspartate 7, glutamate 68, and aspartate 141. Aspartate 7, glutamate 68, and aspartate 141 together coordinate Mg(2+).

The protein belongs to the RuvC family. In terms of assembly, homodimer which binds Holliday junction (HJ) DNA. The HJ becomes 2-fold symmetrical on binding to RuvC with unstacked arms; it has a different conformation from HJ DNA in complex with RuvA. In the full resolvosome a probable DNA-RuvA(4)-RuvB(12)-RuvC(2) complex forms which resolves the HJ. It depends on Mg(2+) as a cofactor.

It localises to the cytoplasm. It catalyses the reaction Endonucleolytic cleavage at a junction such as a reciprocal single-stranded crossover between two homologous DNA duplexes (Holliday junction).. The RuvA-RuvB-RuvC complex processes Holliday junction (HJ) DNA during genetic recombination and DNA repair. Endonuclease that resolves HJ intermediates. Cleaves cruciform DNA by making single-stranded nicks across the HJ at symmetrical positions within the homologous arms, yielding a 5'-phosphate and a 3'-hydroxyl group; requires a central core of homology in the junction. The consensus cleavage sequence is 5'-(A/T)TT(C/G)-3'. Cleavage occurs on the 3'-side of the TT dinucleotide at the point of strand exchange. HJ branch migration catalyzed by RuvA-RuvB allows RuvC to scan DNA until it finds its consensus sequence, where it cleaves and resolves the cruciform DNA. This chain is Crossover junction endodeoxyribonuclease RuvC, found in Mycobacterium tuberculosis (strain ATCC 25177 / H37Ra).